A 950-amino-acid polypeptide reads, in one-letter code: Protocadherin alpha-9 (950 aa).

An N-terminal signal peptide occupies residues 1–29 (MLYSSRGDPEGQPLLLSLLILAMWVVGSG). Cadherin domains are found at residues 30–133 (QLHY…PPVF), 134–242 (PATQ…APVF), 243–350 (DRTL…APQL), 351–455 (TIKT…APAF), 456–565 (AQSE…APAL), and 588–678 (GVVV…APKS). Topologically, residues 30 to 697 (QLHYSVPEEA…GPEVTLVDVN (668 aa)) are extracellular. N-linked (GlcNAc...) asparagine glycosylation is found at Asn254 and Asn265. Asn548 carries N-linked (GlcNAc...) asparagine glycosylation. Residues 698–718 (VYLIIAICAVSSLLVLTLLLY) form a helical membrane-spanning segment. The Cytoplasmic portion of the chain corresponds to 719–950 (TVLRCSAMPT…GNSTTDNSDQ (232 aa)). A PXXP 1 repeat occupies 734 to 737 (PGKP). The segment at 734 to 894 (PGKPTLVCSS…PDKFIIPGSP (161 aa)) is 5 X 4 AA repeats of P-X-X-P. Disordered regions lie at residues 770–808 (MAFS…DWRY), 827–856 (ILRA…EVSP), and 871–950 (YGPG…NSDQ). Residues 789 to 798 (PSASSDSTGK) show a composition bias toward polar residues. PXXP repeat units follow at residues 799–802 (PRQP), 832–835 (PGGP), 873–876 (PGNP), and 891–894 (PGSP). A compositionally biased stretch (basic and acidic residues) spans 909–923 (DKSDFITFGKKEETK).

It is found in the cell membrane. In terms of biological role, potential calcium-dependent cell-adhesion protein. May be involved in the establishment and maintenance of specific neuronal connections in the brain. This is Protocadherin alpha-9 (PCDHA9) from Homo sapiens (Human).